The following is a 636-amino-acid chain: Probable potassium transport system protein Kup (636 aa).

12 helical membrane-spanning segments follow: residues 23 to 43 (MALMLGALGVVYGDIGTSPLY), 57 to 77 (PAHVLGVLSILFWLLMIVVSL), 111 to 131 (WLLIVLGIFGAALFYGDSMIT), 148 to 168 (HTLEPWVVPVALVVLVALFAI), 179 to 199 (LFGPIMALWFATLAVLGGYQI), 217 to 237 (FIAEFPVMSFLLLGAVVLALT), 258 to 278 (WFAMVLPALTLCYFGQGALLL), 287 to 307 (PFFLMAPEWGLAALVGLATVA), 348 to 368 (IYLPQVNALLLCAVLVLVLLF), 377 to 397 (AYGFAVTGTMLTTSVLAFAVL), 409 to 429 (WMVLLGALLVIDILLFGANIF), and 431 to 451 (IHEGGWLPLLVGVVVFTLMMT).

This sequence belongs to the HAK/KUP transporter (TC 2.A.72) family.

The protein localises to the cell inner membrane. The catalysed reaction is K(+)(in) + H(+)(in) = K(+)(out) + H(+)(out). Its function is as follows. Transport of potassium into the cell. Likely operates as a K(+):H(+) symporter. The sequence is that of Probable potassium transport system protein Kup from Bordetella bronchiseptica (strain ATCC BAA-588 / NCTC 13252 / RB50) (Alcaligenes bronchisepticus).